The following is a 436-amino-acid chain: Xylose isomerase (436 aa).

Residues His-100 and Asp-103 contribute to the active site. 7 residues coordinate Mg(2+): Glu-231, Glu-267, His-270, Asp-295, Asp-306, Asp-308, and Asp-338.

Belongs to the xylose isomerase family. In terms of assembly, homotetramer. It depends on Mg(2+) as a cofactor.

It is found in the cytoplasm. It catalyses the reaction alpha-D-xylose = alpha-D-xylulofuranose. This is Xylose isomerase from Agrobacterium fabrum (strain C58 / ATCC 33970) (Agrobacterium tumefaciens (strain C58)).